Here is a 204-residue protein sequence, read N- to C-terminus: Small ribosomal subunit protein uS4 (204 aa).

Residues 93–156 enclose the S4 RNA-binding domain; the sequence is SRLSSVLYHS…AKIPVIVEAV (64 aa).

The protein belongs to the universal ribosomal protein uS4 family. As to quaternary structure, part of the 30S ribosomal subunit. Contacts protein S5. The interaction surface between S4 and S5 is involved in control of translational fidelity.

In terms of biological role, one of the primary rRNA binding proteins, it binds directly to 16S rRNA where it nucleates assembly of the body of the 30S subunit. Its function is as follows. With S5 and S12 plays an important role in translational accuracy. The protein is Small ribosomal subunit protein uS4 of Wolbachia sp. subsp. Brugia malayi (strain TRS).